The primary structure comprises 260 residues: Thiazole synthase (260 aa).

Lys-96 acts as the Schiff-base intermediate with DXP in catalysis. Residues Gly-157, 184–185 (AG), and 206–207 (NT) contribute to the 1-deoxy-D-xylulose 5-phosphate site.

This sequence belongs to the ThiG family. As to quaternary structure, homotetramer. Forms heterodimers with either ThiH or ThiS.

Its subcellular location is the cytoplasm. The catalysed reaction is [ThiS sulfur-carrier protein]-C-terminal-Gly-aminoethanethioate + 2-iminoacetate + 1-deoxy-D-xylulose 5-phosphate = [ThiS sulfur-carrier protein]-C-terminal Gly-Gly + 2-[(2R,5Z)-2-carboxy-4-methylthiazol-5(2H)-ylidene]ethyl phosphate + 2 H2O + H(+). It participates in cofactor biosynthesis; thiamine diphosphate biosynthesis. Catalyzes the rearrangement of 1-deoxy-D-xylulose 5-phosphate (DXP) to produce the thiazole phosphate moiety of thiamine. Sulfur is provided by the thiocarboxylate moiety of the carrier protein ThiS. In vitro, sulfur can be provided by H(2)S. In Bradyrhizobium sp. (strain BTAi1 / ATCC BAA-1182), this protein is Thiazole synthase.